The primary structure comprises 337 residues: Biotin synthase 1 (337 aa).

The interval 1–23 (MSSVLTQPLAFHPPRPAVQPREH) is disordered. The 228-residue stretch at 57–284 (TRVEFATLLS…TARVRLSAGR (228 aa)) folds into the Radical SAM core domain. Residues C72, C76, and C79 each coordinate [4Fe-4S] cluster. [2Fe-2S] cluster is bound by residues C116, C147, C207, and R279.

Belongs to the radical SAM superfamily. Biotin synthase family. Homodimer. It depends on [4Fe-4S] cluster as a cofactor. Requires [2Fe-2S] cluster as cofactor.

It catalyses the reaction (4R,5S)-dethiobiotin + (sulfur carrier)-SH + 2 reduced [2Fe-2S]-[ferredoxin] + 2 S-adenosyl-L-methionine = (sulfur carrier)-H + biotin + 2 5'-deoxyadenosine + 2 L-methionine + 2 oxidized [2Fe-2S]-[ferredoxin]. It participates in cofactor biosynthesis; biotin biosynthesis; biotin from 7,8-diaminononanoate: step 2/2. Functionally, catalyzes the conversion of dethiobiotin (DTB) to biotin by the insertion of a sulfur atom into dethiobiotin via a radical-based mechanism. This is Biotin synthase 1 from Polaromonas sp. (strain JS666 / ATCC BAA-500).